The chain runs to 37 residues: Large ribosomal subunit protein bL36c (37 aa).

This sequence belongs to the bacterial ribosomal protein bL36 family.

It localises to the plastid. The protein localises to the chloroplast. The chain is Large ribosomal subunit protein bL36c from Cyanidioschyzon merolae (strain NIES-3377 / 10D) (Unicellular red alga).